The following is a 290-amino-acid chain: Acetylglutamate kinase (290 aa).

Residues 60–61 (GG), Arg-82, and Asn-187 contribute to the substrate site.

This sequence belongs to the acetylglutamate kinase family. ArgB subfamily.

It localises to the cytoplasm. The catalysed reaction is N-acetyl-L-glutamate + ATP = N-acetyl-L-glutamyl 5-phosphate + ADP. The protein operates within amino-acid biosynthesis; L-arginine biosynthesis; N(2)-acetyl-L-ornithine from L-glutamate: step 2/4. Its function is as follows. Catalyzes the ATP-dependent phosphorylation of N-acetyl-L-glutamate. This chain is Acetylglutamate kinase, found in Marinobacter nauticus (strain ATCC 700491 / DSM 11845 / VT8) (Marinobacter aquaeolei).